A 744-amino-acid chain; its full sequence is MTIPNDIRITPELVAAHGLKPDEYQRILDLIGREPTFTELGIFSAMWNEHCSYKSSKRWLRTLPTSGPQVIQGPGENAGVVDIGDGQCVVFKMESHNHPSYIEPYQGAATGVGGILRDVFTMGARPIAAMNALRFGAPDHPKTQHLVAGVVAGIGGYGNSFGVPTVGGEVNFDPRYNGNCLVNAFAAGLARTDGIFYSKAEGVGLPVVYLGAKTGRDGVGGATMASAEFDETIEEKRPTVQVGDPFTEKCLLEACLELMATGAVIAIQDMGAAGLTCSAVEMGAKGDLGIELDLDKVPVREERMSAYEMMLSESQERMLMVLRPEKEPEAEEIFRKWGLDFAIVGRTTDDLRFRILHGGEEVANLPIKELGDEAPEYDRPWAEPKMPPALDAATVPAADVADSLLKLLGSPDLSSRRWVWEQYDTLIQGNSLQIPGGDAGVVRVEDHPTKALAFSSDVTPRYCEADSFEGGKQAVAECWRNLTATGADPLAVTDNLNFGNPERPEIMGQFVRAIKGIGEACRALSFPIVSGNVSLYNETLGQAIPPTPTIAGVGLIPDWSKMARIAFAGEGQAILLAGAPESWGTHLGQSAYLRDVHGRAEGAPPPVDLAHEKRVGDFVRGVIRSGTVTAAHDCSDGGLAVALAEMAMASGIGARIDAPVNSASAAFFGEDQGRYVLTAALAREDAQLATLIEDARKAGVSLIAIGVTGGRELKLGEARAISVEELKEAHEGWFPRFMQDGSLQ.

The active site involves H50. ATP contacts are provided by Y53 and K92. A Mg(2+)-binding site is contributed by E94. Substrate is bound by residues 95–98 (SHNH) and R117. H96 (proton acceptor) is an active-site residue. D118 is a binding site for Mg(2+). Q241 lines the substrate pocket. Mg(2+) is bound at residue D269. Residue 313-315 (ESQ) participates in substrate binding. ATP is bound by residues D494 and G531. N532 contributes to the Mg(2+) binding site. Residue S534 participates in substrate binding.

This sequence belongs to the FGAMS family. In terms of assembly, monomer. Part of the FGAM synthase complex composed of 1 PurL, 1 PurQ and 2 PurS subunits.

Its subcellular location is the cytoplasm. The catalysed reaction is N(2)-formyl-N(1)-(5-phospho-beta-D-ribosyl)glycinamide + L-glutamine + ATP + H2O = 2-formamido-N(1)-(5-O-phospho-beta-D-ribosyl)acetamidine + L-glutamate + ADP + phosphate + H(+). It functions in the pathway purine metabolism; IMP biosynthesis via de novo pathway; 5-amino-1-(5-phospho-D-ribosyl)imidazole from N(2)-formyl-N(1)-(5-phospho-D-ribosyl)glycinamide: step 1/2. Its function is as follows. Part of the phosphoribosylformylglycinamidine synthase complex involved in the purines biosynthetic pathway. Catalyzes the ATP-dependent conversion of formylglycinamide ribonucleotide (FGAR) and glutamine to yield formylglycinamidine ribonucleotide (FGAM) and glutamate. The FGAM synthase complex is composed of three subunits. PurQ produces an ammonia molecule by converting glutamine to glutamate. PurL transfers the ammonia molecule to FGAR to form FGAM in an ATP-dependent manner. PurS interacts with PurQ and PurL and is thought to assist in the transfer of the ammonia molecule from PurQ to PurL. In Chelativorans sp. (strain BNC1), this protein is Phosphoribosylformylglycinamidine synthase subunit PurL.